The following is a 62-amino-acid chain: MVSTRQCSFCGKDILPGTGLMYVRNDGSLLWFCSSKCRKSMLKLHRDPKKLKWTKSYLGAKP.

Zn(2+) contacts are provided by cysteine 7, cysteine 10, cysteine 33, and cysteine 37. The C4-type zinc-finger motif lies at cysteine 7–cysteine 37.

It belongs to the eukaryotic ribosomal protein eL24 family. Part of the 50S ribosomal subunit. Forms a cluster with proteins L3 and L14. Zn(2+) serves as cofactor.

Functionally, binds to the 23S rRNA. This Sulfolobus acidocaldarius (strain ATCC 33909 / DSM 639 / JCM 8929 / NBRC 15157 / NCIMB 11770) protein is Large ribosomal subunit protein eL24.